Here is a 427-residue protein sequence, read N- to C-terminus: 3-phosphoshikimate 1-carboxyvinyltransferase (427 aa).

Lysine 22, serine 23, and arginine 27 together coordinate 3-phosphoshikimate. Phosphoenolpyruvate is bound at residue lysine 22. Phosphoenolpyruvate contacts are provided by glycine 93 and arginine 122. 3-phosphoshikimate contacts are provided by serine 167, glutamine 169, aspartate 315, and lysine 342. Glutamine 169 lines the phosphoenolpyruvate pocket. Aspartate 315 acts as the Proton acceptor in catalysis. Positions 346 and 387 each coordinate phosphoenolpyruvate.

The protein belongs to the EPSP synthase family. As to quaternary structure, monomer.

The protein localises to the cytoplasm. It carries out the reaction 3-phosphoshikimate + phosphoenolpyruvate = 5-O-(1-carboxyvinyl)-3-phosphoshikimate + phosphate. Its pathway is metabolic intermediate biosynthesis; chorismate biosynthesis; chorismate from D-erythrose 4-phosphate and phosphoenolpyruvate: step 6/7. Catalyzes the transfer of the enolpyruvyl moiety of phosphoenolpyruvate (PEP) to the 5-hydroxyl of shikimate-3-phosphate (S3P) to produce enolpyruvyl shikimate-3-phosphate and inorganic phosphate. This chain is 3-phosphoshikimate 1-carboxyvinyltransferase, found in Thermus thermophilus (strain ATCC BAA-163 / DSM 7039 / HB27).